The primary structure comprises 1766 residues: DNA-directed RNA polymerase II subunit RPB1-A (1766 aa).

4 residues coordinate Zn(2+): C69, C72, C79, and H82. D487, D489, and D491 together coordinate Mg(2+). The interval 813–825 is bridging helix; the sequence is PHEFFFHTMAGRE. The segment at 1660–1766 is disordered; sequence HAMSSAAPPS…EFGDEEEEEQ (107 aa). Positions 1706-1716 are enriched in basic and acidic residues; the sequence is RGDEPSTHRSD. Residues 1742–1756 are compositionally biased toward low complexity; that stretch reads PTAKTPQQAAPPTAA.

This sequence belongs to the RNA polymerase beta' chain family. As to quaternary structure, component of the RNA polymerase II (Pol II) complex consisting of 12 subunits.

The protein resides in the nucleus. It carries out the reaction RNA(n) + a ribonucleoside 5'-triphosphate = RNA(n+1) + diphosphate. Functionally, DNA-dependent RNA polymerase catalyzes the transcription of DNA into RNA using the four ribonucleoside triphosphates as substrates. Largest and catalytic component of RNA polymerase II which synthesizes mRNA precursors and many functional non-coding RNAs. Forms the polymerase active center together with the second largest subunit. Pol II is the central component of the basal RNA polymerase II transcription machinery. It is composed of mobile elements that move relative to each other. RPB1 is part of the core element with the central large cleft, the clamp element that moves to open and close the cleft and the jaws that are thought to grab the incoming DNA template. At the start of transcription, a single-stranded DNA template strand of the promoter is positioned within the central active site cleft of Pol II. A bridging helix emanates from RPB1 and crosses the cleft near the catalytic site and is thought to promote translocation of Pol II by acting as a ratchet that moves the RNA-DNA hybrid through the active site by switching from straight to bent conformations at each step of nucleotide addition. During transcription elongation, Pol II moves on the template as the transcript elongates. This Trypanosoma brucei brucei protein is DNA-directed RNA polymerase II subunit RPB1-A (TRP4.8).